A 391-amino-acid chain; its full sequence is Phosphoglycerate kinase (391 aa).

Substrate is bound by residues 21-23 (DLN), R36, 59-62 (HLGR), R113, and R146. ATP is bound by residues K197, E319, and 345 to 348 (GGDT).

This sequence belongs to the phosphoglycerate kinase family. As to quaternary structure, monomer.

Its subcellular location is the cytoplasm. It carries out the reaction (2R)-3-phosphoglycerate + ATP = (2R)-3-phospho-glyceroyl phosphate + ADP. It functions in the pathway carbohydrate degradation; glycolysis; pyruvate from D-glyceraldehyde 3-phosphate: step 2/5. This Shewanella baltica (strain OS223) protein is Phosphoglycerate kinase.